The chain runs to 1083 residues: Glutamate receptor-interacting protein 2 (1083 aa).

3 PDZ domains span residues Ile-58 to Leu-141, Thr-156 to Val-244, and Leu-258 to His-342. Over residues Ala-408–Pro-422 the composition is skewed to polar residues. Residues Ala-408 to Gln-460 are disordered. Residues Met-434–His-444 show a composition bias toward basic residues. 3 consecutive PDZ domains span residues Glu-468–Phe-555, His-569–Glu-652, and Thr-667–Thr-749. Disordered regions lie at residues Pro-754–Ile-783, Asn-853–Thr-872, and Gly-936–Ala-965. Residues Ser-774–Ile-783 show a composition bias toward polar residues. A compositionally biased stretch (basic and acidic residues) spans Pro-945–His-963. The 83-residue stretch at Lys-974–Leu-1056 folds into the PDZ 7 domain.

It belongs to the GRIP2 family. Enriched in the mitochondrial cloud of stage I oocytes, before becoming concentrated at the tip of the vegetal cortex in stage II oocytes. Expression becomes localized to the germ plasm of stage III-IV oocytes and early cleavage stages. At the tailbud stage, localizes to the migrating primordial germ cells (PGCs) until PGC migration is complete (stage 40), at which point expression disappears. In the adult, expressed in the brain, ovary, eye, muscle, spinal cord and very weakly in adipocytes.

It is found in the cytoplasm. Its function is as follows. Plays an important role in primordial germ cell (PGC) maintenance and efficiency of PGC migration. In Xenopus laevis (African clawed frog), this protein is Glutamate receptor-interacting protein 2.